The following is a 421-amino-acid chain: UDP-N-acetylglucosamine 1-carboxyvinyltransferase 2 (421 aa).

Position 22–23 (22–23 (KN)) interacts with phosphoenolpyruvate. Residue R94 participates in UDP-N-acetyl-alpha-D-glucosamine binding. The Proton donor role is filled by C118. C118 carries the 2-(S-cysteinyl)pyruvic acid O-phosphothioketal modification. UDP-N-acetyl-alpha-D-glucosamine is bound by residues D308 and I330.

The protein belongs to the EPSP synthase family. MurA subfamily.

It is found in the cytoplasm. The catalysed reaction is phosphoenolpyruvate + UDP-N-acetyl-alpha-D-glucosamine = UDP-N-acetyl-3-O-(1-carboxyvinyl)-alpha-D-glucosamine + phosphate. It participates in cell wall biogenesis; peptidoglycan biosynthesis. Its function is as follows. Cell wall formation. Adds enolpyruvyl to UDP-N-acetylglucosamine. This is UDP-N-acetylglucosamine 1-carboxyvinyltransferase 2 from Lactococcus lactis subsp. lactis (strain IL1403) (Streptococcus lactis).